Here is a 183-residue protein sequence, read N- to C-terminus: MNGDETKKVESEYIKKHHRHELVESQCSSTLVKHIKAPLHLVWSIVRRFDEPQKYKPFISRCVVQGKKLEVGSVREVDLKSGLPATKSTEVLEILDDNEHILGIRIVGGDHRLKNYSSTISLHSETIDGKTGTLAIESFVVDVPEGNTKEETCFFVEALIQCNLNSLADVTERLQAESMEKKI.

An START-like region spans residues 20–172 (HELVESQCSS…NLNSLADVTE (153 aa)). Cys-27 and Cys-153 are disulfide-bonded. Residues Lys-56, 85–90 (ATKSTE), 112–118 (RLKNYSS), and Glu-137 each bind abscisate. Positions 81–85 (SGLPA) match the Gate loop motif. A Latch loop motif is present at residues 111–113 (HRL).

Belongs to the PYR/PYL/RCAR abscisic acid intracellular receptor family. As to quaternary structure, monomer. Forms heterodimer with PYL13, thus antagonizing PP2Cs-binding and ABA-independent inhibition of PP2Cs. Homodimer. Binds ABA on one subunit only. Binds to CARs protein in an ABA-independent manner, both at the plasma membrane and in the nucleus. Interacts with ABI1 and HAB1, and possibly with other PP2Cs, in an ABA-independent manner.

The protein localises to the cytoplasm. It is found in the nucleus. It localises to the cell membrane. Receptor for abscisic acid (ABA) required for ABA-mediated responses such as stomatal closure and germination inhibition. Inhibits the activity of group-A protein phosphatases type 2C (PP2Cs) in an ABA-independent manner but more efficiently when activated by ABA. Can be activated by both (-)-ABA and (+)-ABA. The sequence is that of Abscisic acid receptor PYL10 (PYL10) from Arabidopsis thaliana (Mouse-ear cress).